We begin with the raw amino-acid sequence, 95 residues long: Small ribosomal subunit protein bS6 (95 aa).

Belongs to the bacterial ribosomal protein bS6 family.

In terms of biological role, binds together with bS18 to 16S ribosomal RNA. The sequence is that of Small ribosomal subunit protein bS6 from Corynebacterium kroppenstedtii (strain DSM 44385 / JCM 11950 / CIP 105744 / CCUG 35717).